The primary structure comprises 525 residues: GMP synthase [glutamine-hydrolyzing] (525 aa).

Residues 9–207 (RILILDFGSQ…VSDICGCEKQ (199 aa)) form the Glutamine amidotransferase type-1 domain. The active-site Nucleophile is cysteine 86. Catalysis depends on residues histidine 181 and glutamate 183. The region spanning 208 to 400 (WTPAKIIDDA…LGLPYNMLYR (193 aa)) is the GMPS ATP-PPase domain. 235-241 (SGGVDSS) serves as a coordination point for ATP.

Homodimer.

It catalyses the reaction XMP + L-glutamine + ATP + H2O = GMP + L-glutamate + AMP + diphosphate + 2 H(+). It functions in the pathway purine metabolism; GMP biosynthesis; GMP from XMP (L-Gln route): step 1/1. Functionally, catalyzes the synthesis of GMP from XMP. This is GMP synthase [glutamine-hydrolyzing] from Idiomarina loihiensis (strain ATCC BAA-735 / DSM 15497 / L2-TR).